The primary structure comprises 200 residues: Recombination protein RecR (200 aa).

The C4-type zinc finger occupies 60–75 (CVYCQALTEDDVCNIC). Residues 83–177 (TKLCIIESML…KISRIGFGVP (95 aa)) enclose the Toprim domain.

The protein belongs to the RecR family.

Functionally, may play a role in DNA repair. It seems to be involved in an RecBC-independent recombinational process of DNA repair. It may act with RecF and RecO. This Francisella tularensis subsp. mediasiatica (strain FSC147) protein is Recombination protein RecR.